The chain runs to 559 residues: NXPE family member 3 (559 aa).

The N-terminal stretch at methionine 1 to valine 30 is a signal peptide. N-linked (GlcNAc...) asparagine glycans are attached at residues asparagine 26, asparagine 237, and asparagine 346.

Belongs to the NXPE family.

The protein localises to the secreted. In Pongo abelii (Sumatran orangutan), this protein is NXPE family member 3 (NXPE3).